The following is a 425-amino-acid chain: MLELKFVRAHPEIVRADLTKRGDTEKLAWVDEVLEMDRRARELTVAIGDLRNRRNVISREISQARKAGNDITELLAEAAGLPERIKEVETERETLTEAVRYRLMRLPNILHESVPVGKDDSENVEIRRWGEPEIPAFDLENHGALAVEHGWADFERAAKIAGSGFYFLKGRLALLDMALQRFAMDILVEHGYTPIIPPYMMNRAAYEGVTDLADFENVMYRIDGEDEYLIATSEHPMAAMYCDEIFEEKDLPLRLAGLSPCFRREIGAHGLDTKGLFRVHQFHKVEQFIYATPEQSWDLHEELMANAEEVFQRLGLPYRIVSICTGDIGTVAAKKYDLEVWMPREERYREAVSCSNCTAYQAVRLNIKVRNPTEFTEKRYVHTLNSTAIATSRAIRAILENNQNEDGSVTIPKALRPYLYGSETL.

Residue 232 to 234 (TSE) coordinates L-serine. ATP contacts are provided by residues 263-265 (RRE) and V279. E286 serves as a coordination point for L-serine. Residue 350–353 (EAVS) coordinates ATP. T387 is a binding site for L-serine.

This sequence belongs to the class-II aminoacyl-tRNA synthetase family. Type-1 seryl-tRNA synthetase subfamily. In terms of assembly, homodimer. The tRNA molecule binds across the dimer.

The protein localises to the cytoplasm. It catalyses the reaction tRNA(Ser) + L-serine + ATP = L-seryl-tRNA(Ser) + AMP + diphosphate + H(+). The enzyme catalyses tRNA(Sec) + L-serine + ATP = L-seryl-tRNA(Sec) + AMP + diphosphate + H(+). It participates in aminoacyl-tRNA biosynthesis; selenocysteinyl-tRNA(Sec) biosynthesis; L-seryl-tRNA(Sec) from L-serine and tRNA(Sec): step 1/1. Functionally, catalyzes the attachment of serine to tRNA(Ser). Is also able to aminoacylate tRNA(Sec) with serine, to form the misacylated tRNA L-seryl-tRNA(Sec), which will be further converted into selenocysteinyl-tRNA(Sec). This Methanoculleus marisnigri (strain ATCC 35101 / DSM 1498 / JR1) protein is Serine--tRNA ligase.